A 181-amino-acid polypeptide reads, in one-letter code: Adenine phosphoribosyltransferase (181 aa).

Belongs to the purine/pyrimidine phosphoribosyltransferase family. As to quaternary structure, homodimer.

Its subcellular location is the cytoplasm. It carries out the reaction AMP + diphosphate = 5-phospho-alpha-D-ribose 1-diphosphate + adenine. It functions in the pathway purine metabolism; AMP biosynthesis via salvage pathway; AMP from adenine: step 1/1. In terms of biological role, catalyzes a salvage reaction resulting in the formation of AMP, that is energically less costly than de novo synthesis. In Cytophaga hutchinsonii (strain ATCC 33406 / DSM 1761 / CIP 103989 / NBRC 15051 / NCIMB 9469 / D465), this protein is Adenine phosphoribosyltransferase.